The following is a 309-amino-acid chain: MTAKTIRHYLQFKDFSLEDYEYVLERTGILKRKFKNYETYHPLHDRTLAMIFEKSSTRTRLSFEAGIFQLGGHAVFMSTRDTQLGRGEPVEDSAQVISRMVDIIMIRTFEQDVITRFAQNSRVPVINGLTNEYHPCQVLADIFTYYEHRGPIAGKTVAWVGDANNMLYTWIEAAQILGFKLRLSTPPGYALDMKLVSPDSAPFYEVFDDPNEACKGADLVTTDVWTSMGFEAENEARKQAFADWCVDEEMMGHANPDALFMHCLPAHRGEEVTAGVIDGPQSVVWDEAENRLHVQKALMEFLLLGRLKH.

Residues 56 to 59 (STRT), Q83, R107, and 134 to 137 (HPCQ) each bind carbamoyl phosphate. Residues N165, D223, and 227–228 (SM) each bind L-ornithine. Residues 263–264 (CL) and R291 contribute to the carbamoyl phosphate site.

The protein belongs to the aspartate/ornithine carbamoyltransferase superfamily. OTCase family.

The protein localises to the cytoplasm. It carries out the reaction carbamoyl phosphate + L-ornithine = L-citrulline + phosphate + H(+). It participates in amino-acid biosynthesis; L-arginine biosynthesis; L-arginine from L-ornithine and carbamoyl phosphate: step 1/3. Functionally, reversibly catalyzes the transfer of the carbamoyl group from carbamoyl phosphate (CP) to the N(epsilon) atom of ornithine (ORN) to produce L-citrulline. The chain is Ornithine carbamoyltransferase from Burkholderia cenocepacia (strain HI2424).